Here is a 271-residue protein sequence, read N- to C-terminus: Regulatory protein RecX (271 aa).

This sequence belongs to the RecX family.

It localises to the cytoplasm. Modulates RecA activity. This chain is Regulatory protein RecX, found in Lactobacillus johnsonii (strain CNCM I-12250 / La1 / NCC 533).